Here is a 598-residue protein sequence, read N- to C-terminus: Elongation factor 4 (598 aa).

The 183-residue stretch at 4 to 186 (INIRNFAIIA…AIVSRLPAPS (183 aa)) folds into the tr-type G domain. GTP-binding positions include 16 to 21 (DHGKST) and 133 to 136 (NKID).

This sequence belongs to the TRAFAC class translation factor GTPase superfamily. Classic translation factor GTPase family. LepA subfamily.

The protein resides in the cell inner membrane. It catalyses the reaction GTP + H2O = GDP + phosphate + H(+). Required for accurate and efficient protein synthesis under certain stress conditions. May act as a fidelity factor of the translation reaction, by catalyzing a one-codon backward translocation of tRNAs on improperly translocated ribosomes. Back-translocation proceeds from a post-translocation (POST) complex to a pre-translocation (PRE) complex, thus giving elongation factor G a second chance to translocate the tRNAs correctly. Binds to ribosomes in a GTP-dependent manner. This is Elongation factor 4 from Ehrlichia ruminantium (strain Gardel).